The primary structure comprises 874 residues: DNA mismatch repair protein MutS (874 aa).

Positions 1–12 are enriched in basic and acidic residues; the sequence is MSNDRPLTHSEA. Residues 1 to 20 are disordered; sequence MSNDRPLTHSEAESSALRLG. 661 to 668 is a binding site for ATP; sequence GPNASGKS. The disordered stretch occupies residues 854–874; that stretch reads RKSSMGDPPTAPEINQGELPF.

This sequence belongs to the DNA mismatch repair MutS family.

In terms of biological role, this protein is involved in the repair of mismatches in DNA. It is possible that it carries out the mismatch recognition step. This protein has a weak ATPase activity. The polypeptide is DNA mismatch repair protein MutS (Thermosynechococcus vestitus (strain NIES-2133 / IAM M-273 / BP-1)).